The chain runs to 209 residues: Small ribosomal subunit protein uS4 (209 aa).

The segment at 22 to 45 is disordered; sequence RGRNPLLRKPNPPGQHGMQRKKKS. The region spanning 93–154 is the S4 RNA-binding domain; it reads CRLDSIVYRL…KSKRLAIVTE (62 aa).

This sequence belongs to the universal ribosomal protein uS4 family. As to quaternary structure, part of the 30S ribosomal subunit. Contacts protein S5. The interaction surface between S4 and S5 is involved in control of translational fidelity.

Functionally, one of the primary rRNA binding proteins, it binds directly to 16S rRNA where it nucleates assembly of the body of the 30S subunit. With S5 and S12 plays an important role in translational accuracy. This chain is Small ribosomal subunit protein uS4, found in Chlamydia trachomatis serovar L2 (strain ATCC VR-902B / DSM 19102 / 434/Bu).